The primary structure comprises 118 residues: Large ribosomal subunit protein uL18 (118 aa).

This sequence belongs to the universal ribosomal protein uL18 family. As to quaternary structure, part of the 50S ribosomal subunit; part of the 5S rRNA/L5/L18/L25 subcomplex. Contacts the 5S and 23S rRNAs.

Its function is as follows. This is one of the proteins that bind and probably mediate the attachment of the 5S RNA into the large ribosomal subunit, where it forms part of the central protuberance. This is Large ribosomal subunit protein uL18 from Campylobacter jejuni subsp. jejuni serotype O:6 (strain 81116 / NCTC 11828).